The primary structure comprises 214 residues: Redox-sensing transcriptional repressor Rex (214 aa).

Residues 17–56 (LYYRIFKRFHADQVEKASSKQIADAMGIDSATVRRDFSYF) constitute a DNA-binding region (H-T-H motif). 91 to 96 (GCGNIG) is a binding site for NAD(+).

It belongs to the transcriptional regulatory Rex family. In terms of assembly, homodimer.

The protein localises to the cytoplasm. Modulates transcription in response to changes in cellular NADH/NAD(+) redox state. The chain is Redox-sensing transcriptional repressor Rex from Streptococcus pyogenes serotype M1.